The primary structure comprises 1164 residues: DNA-directed RNA polymerase subunit beta' (1164 aa).

Zn(2+) contacts are provided by C60, C62, C75, and C78. Residues D449, D451, and D453 each coordinate Mg(2+). Positions 776, 850, 857, and 860 each coordinate Zn(2+).

It belongs to the RNA polymerase beta' chain family. The RNAP catalytic core consists of 2 alpha, 1 beta, 1 beta' and 1 omega subunit. When a sigma factor is associated with the core the holoenzyme is formed, which can initiate transcription. Mg(2+) is required as a cofactor. It depends on Zn(2+) as a cofactor.

The catalysed reaction is RNA(n) + a ribonucleoside 5'-triphosphate = RNA(n+1) + diphosphate. Its function is as follows. DNA-dependent RNA polymerase catalyzes the transcription of DNA into RNA using the four ribonucleoside triphosphates as substrates. The chain is DNA-directed RNA polymerase subunit beta' from Moorella thermoacetica (strain ATCC 39073 / JCM 9320).